The primary structure comprises 149 residues: 3-dehydroquinate dehydratase (149 aa).

The Proton acceptor role is filled by Tyr26. Residues Asn78, His84, and Asp91 each coordinate substrate. The active-site Proton donor is His104. Residues 105 to 106 (LS) and Arg115 contribute to the substrate site.

Belongs to the type-II 3-dehydroquinase family. In terms of assembly, homododecamer.

It catalyses the reaction 3-dehydroquinate = 3-dehydroshikimate + H2O. Its pathway is metabolic intermediate biosynthesis; chorismate biosynthesis; chorismate from D-erythrose 4-phosphate and phosphoenolpyruvate: step 3/7. Functionally, catalyzes a trans-dehydration via an enolate intermediate. The sequence is that of 3-dehydroquinate dehydratase from Polynucleobacter asymbioticus (strain DSM 18221 / CIP 109841 / QLW-P1DMWA-1) (Polynucleobacter necessarius subsp. asymbioticus).